The following is a 154-amino-acid chain: Proteasome subunit beta type-4 (154 aa).

Position 1 is an N-acetylmethionine (Met1). Positions 1–45 (MESILESRSGHWAGGPAPGQFYRIPPTPGSIVDPXSVLYGSPITR) are excised as a propeptide. A Phosphotyrosine modification is found at Tyr102.

This sequence belongs to the peptidase T1B family. In terms of assembly, the 26S proteasome consists of a 20S proteasome core and two 19S regulatory subunits. The 20S proteasome core is a barrel-shaped complex made of 28 subunits that are arranged in four stacked rings. The two outer rings are each formed by seven alpha subunits, and the two inner rings are formed by seven beta subunits. The proteolytic activity is exerted by three beta-subunits PSMB5, PSMB6 and PSMB7. Forms a ternary complex with SMAD1 and OAZ1 before PSMB4 is incorporated into the 20S proteasome. Interacts with PRPF19.

The protein localises to the cytoplasm. It localises to the nucleus. In terms of biological role, non-catalytic component of the 20S core proteasome complex involved in the proteolytic degradation of most intracellular proteins. This complex plays numerous essential roles within the cell by associating with different regulatory particles. Associated with two 19S regulatory particles, forms the 26S proteasome and thus participates in the ATP-dependent degradation of ubiquitinated proteins. The 26S proteasome plays a key role in the maintenance of protein homeostasis by removing misfolded or damaged proteins that could impair cellular functions, and by removing proteins whose functions are no longer required. Associated with the PA200 or PA28, the 20S proteasome mediates ubiquitin-independent protein degradation. This type of proteolysis is required in several pathways including spermatogenesis (20S-PA200 complex) or generation of a subset of MHC class I-presented antigenic peptides (20S-PA28 complex). SMAD1/OAZ1/PSMB4 complex mediates the degradation of the CREBBP/EP300 repressor SNIP1. This chain is Proteasome subunit beta type-4 (PSMB4), found in Sus scrofa (Pig).